The primary structure comprises 331 residues: MARMYYDQDANLDLLAGKTVAIIGYGSQGHAHALNLKDSGVNVVVGLYSGSKSVAKAEGAGLKVLSVAEAAKAADLIMILLPDEVQKTVYEAEIAPNLVAGNVLLFAHGFNINFAQIVPPADVDVVMAAPKGPGHLVRRTYEQGQGVPALFAVYQDASGQARDYAMAYAKGIGGTRAGILETTFREETETDLFGEQVVLCGGLTALIKAGFDTLVEAGYQPELAYFECLHEVKLIVDLIVEGGLAKMRDSISNTAEYGDLTRGPRIVTEETKAEMRQILDEIQSGQFAREFVLENQAGKPGFTAMRRRESEELIEEVGKDLRAMFSWLKDR.

The region spanning 2–182 is the KARI N-terminal Rossmann domain; sequence ARMYYDQDAN…GGTRAGILET (181 aa). NADP(+)-binding positions include 25 to 28, Ser-51, Ser-53, and 83 to 86; these read YGSQ and DEVQ. The active site involves His-108. Gly-134 contacts NADP(+). The region spanning 183-328 is the KARI C-terminal knotted domain; it reads TFREETETDL…KDLRAMFSWL (146 aa). The Mg(2+) site is built by Asp-191, Glu-195, Glu-227, and Glu-231. Ser-252 lines the substrate pocket.

The protein belongs to the ketol-acid reductoisomerase family. As to quaternary structure, homooctamer. It depends on Mg(2+) as a cofactor.

The enzyme catalyses (2R)-2,3-dihydroxy-3-methylbutanoate + NADP(+) = (2S)-2-acetolactate + NADPH + H(+). The catalysed reaction is (2R,3R)-2,3-dihydroxy-3-methylpentanoate + NADP(+) = (S)-2-ethyl-2-hydroxy-3-oxobutanoate + NADPH + H(+). Its pathway is amino-acid biosynthesis; L-isoleucine biosynthesis; L-isoleucine from 2-oxobutanoate: step 2/4. It functions in the pathway amino-acid biosynthesis; L-valine biosynthesis; L-valine from pyruvate: step 2/4. Functionally, involved in the biosynthesis of branched-chain amino acids (BCAA). Catalyzes an alkyl-migration followed by a ketol-acid reduction of (S)-2-acetolactate (S2AL) to yield (R)-2,3-dihydroxy-isovalerate. In the isomerase reaction, S2AL is rearranged via a Mg-dependent methyl migration to produce 3-hydroxy-3-methyl-2-ketobutyrate (HMKB). In the reductase reaction, this 2-ketoacid undergoes a metal-dependent reduction by NADPH to yield (R)-2,3-dihydroxy-isovalerate. The protein is Ketol-acid reductoisomerase (NADP(+)) of Synechocystis sp. (strain ATCC 27184 / PCC 6803 / Kazusa).